We begin with the raw amino-acid sequence, 376 residues long: Chorismate synthase (376 aa).

NADP(+)-binding residues include arginine 39 and arginine 45. Residues 115–117 (RSS), glycine 276, 291–295 (KPIPT), and arginine 317 each bind FMN.

Belongs to the chorismate synthase family. In terms of assembly, homotetramer. FMNH2 is required as a cofactor.

It carries out the reaction 5-O-(1-carboxyvinyl)-3-phosphoshikimate = chorismate + phosphate. It functions in the pathway metabolic intermediate biosynthesis; chorismate biosynthesis; chorismate from D-erythrose 4-phosphate and phosphoenolpyruvate: step 7/7. In terms of biological role, catalyzes the anti-1,4-elimination of the C-3 phosphate and the C-6 proR hydrogen from 5-enolpyruvylshikimate-3-phosphate (EPSP) to yield chorismate, which is the branch point compound that serves as the starting substrate for the three terminal pathways of aromatic amino acid biosynthesis. This reaction introduces a second double bond into the aromatic ring system. This chain is Chorismate synthase, found in Thermotoga sp. (strain RQ2).